The sequence spans 241 residues: tRNA pseudouridine synthase B (241 aa).

D45 serves as the catalytic Nucleophile.

This sequence belongs to the pseudouridine synthase TruB family. Type 1 subfamily.

The enzyme catalyses uridine(55) in tRNA = pseudouridine(55) in tRNA. Functionally, responsible for synthesis of pseudouridine from uracil-55 in the psi GC loop of transfer RNAs. The protein is tRNA pseudouridine synthase B of Opitutus terrae (strain DSM 11246 / JCM 15787 / PB90-1).